The sequence spans 411 residues: Serine--tRNA ligase (411 aa).

Residue 226–228 (TSE) participates in L-serine binding. Residue 257–259 (RKE) coordinates ATP. Position 280 (glutamate 280) interacts with L-serine. Residue 344–347 (EISS) coordinates ATP. L-serine is bound at residue serine 379.

This sequence belongs to the class-II aminoacyl-tRNA synthetase family. Type-1 seryl-tRNA synthetase subfamily. As to quaternary structure, homodimer. The tRNA molecule binds across the dimer.

It localises to the cytoplasm. It carries out the reaction tRNA(Ser) + L-serine + ATP = L-seryl-tRNA(Ser) + AMP + diphosphate + H(+). The enzyme catalyses tRNA(Sec) + L-serine + ATP = L-seryl-tRNA(Sec) + AMP + diphosphate + H(+). It functions in the pathway aminoacyl-tRNA biosynthesis; selenocysteinyl-tRNA(Sec) biosynthesis; L-seryl-tRNA(Sec) from L-serine and tRNA(Sec): step 1/1. Its function is as follows. Catalyzes the attachment of serine to tRNA(Ser). Is also able to aminoacylate tRNA(Sec) with serine, to form the misacylated tRNA L-seryl-tRNA(Sec), which will be further converted into selenocysteinyl-tRNA(Sec). This is Serine--tRNA ligase from Campylobacter jejuni subsp. jejuni serotype O:23/36 (strain 81-176).